The sequence spans 488 residues: Cobyric acid synthase (488 aa).

Positions 250 to 438 constitute a GATase cobBQ-type domain; sequence DITIAIIRLP…LHGIFDNGSW (189 aa). Cys331 (nucleophile) is an active-site residue. His430 is a catalytic residue.

This sequence belongs to the CobB/CobQ family. CobQ subfamily.

It participates in cofactor biosynthesis; adenosylcobalamin biosynthesis. Functionally, catalyzes amidations at positions B, D, E, and G on adenosylcobyrinic A,C-diamide. NH(2) groups are provided by glutamine, and one molecule of ATP is hydrogenolyzed for each amidation. This chain is Cobyric acid synthase, found in Trichodesmium erythraeum (strain IMS101).